The primary structure comprises 173 residues: NADH-ubiquinone oxidoreductase chain 6 (173 aa).

5 consecutive transmembrane segments (helical) span residues 1 to 21 (MTYF…AVAS), 27 to 47 (YGVV…LSLG), 48 to 68 (ASFV…VVFV), 87 to 107 (VIGY…ISGF), and 139 to 159 (WGVG…FVVL).

This sequence belongs to the complex I subunit 6 family.

Its subcellular location is the mitochondrion membrane. It carries out the reaction a ubiquinone + NADH + 5 H(+)(in) = a ubiquinol + NAD(+) + 4 H(+)(out). Functionally, core subunit of the mitochondrial membrane respiratory chain NADH dehydrogenase (Complex I) that is believed to belong to the minimal assembly required for catalysis. Complex I functions in the transfer of electrons from NADH to the respiratory chain. The immediate electron acceptor for the enzyme is believed to be ubiquinone. In Brachyramphus marmoratus (Marbled murrelet), this protein is NADH-ubiquinone oxidoreductase chain 6 (MT-ND6).